The following is a 190-amino-acid chain: 6,7-dimethyl-8-ribityllumazine synthase (190 aa).

Residues Phe23, 61 to 63, and 85 to 87 each bind 5-amino-6-(D-ribitylamino)uracil; these read SFE and AVI. (2S)-2-hydroxy-3-oxobutyl phosphate is bound at residue 90-91; that stretch reads QT. Residue His93 is the Proton donor of the active site. A 5-amino-6-(D-ribitylamino)uracil-binding site is contributed by Phe118. Position 132 (Arg132) interacts with (2S)-2-hydroxy-3-oxobutyl phosphate.

The protein belongs to the DMRL synthase family.

It carries out the reaction (2S)-2-hydroxy-3-oxobutyl phosphate + 5-amino-6-(D-ribitylamino)uracil = 6,7-dimethyl-8-(1-D-ribityl)lumazine + phosphate + 2 H2O + H(+). The protein operates within cofactor biosynthesis; riboflavin biosynthesis; riboflavin from 2-hydroxy-3-oxobutyl phosphate and 5-amino-6-(D-ribitylamino)uracil: step 1/2. Functionally, catalyzes the formation of 6,7-dimethyl-8-ribityllumazine by condensation of 5-amino-6-(D-ribitylamino)uracil with 3,4-dihydroxy-2-butanone 4-phosphate. This is the penultimate step in the biosynthesis of riboflavin. In Trichormus variabilis (strain ATCC 29413 / PCC 7937) (Anabaena variabilis), this protein is 6,7-dimethyl-8-ribityllumazine synthase.